The following is a 581-amino-acid chain: Interleukin-22 receptor subunit alpha-1 (581 aa).

The first 15 residues, 1-15 (MKTLLTILTVGSLAA), serve as a signal peptide directing secretion. At 16–230 (HTTVDTSGLL…TLPDRTWAYS (215 aa)) the chain is on the extracellular side. Fibronectin type-III domains are found at residues 18–115 (TVDT…RFSS) and 141–221 (PTLT…RVKT). Cys71 and Cys79 are disulfide-bonded. N-linked (GlcNAc...) asparagine glycans are attached at residues Asn80 and Asn172. A disulfide bond links Cys128 and Cys217. A helical transmembrane segment spans residues 231-251 (FSGAVLFSMGFLVGLLCYLGY). Topologically, residues 252–581 (KYITKPPVPP…GLALTVQWES (330 aa)) are cytoplasmic. A disordered region spans residues 343–364 (QQTLSPPSYAPKAVPEVQPPSY). Residues Ser410 and Ser414 each carry the phosphoserine; by GSK3-beta modification. Residue Lys449 forms a Glycyl lysine isopeptide (Lys-Gly) (interchain with G-Cter in ubiquitin) linkage.

Belongs to the type II cytokine receptor family. As to quaternary structure, heterodimer with IL10RB and with IL20RB. Post-translationally, phosphorylated by GSK3-BETA and MAPK; phosphorylation by GSK3-BETA stabilizes IL22RA1 by preventing its proteasomal degradation. In terms of tissue distribution, expressed in kidney, liver and lung.

It is found in the cell membrane. Component of the receptor for IL20, IL22 and IL24. Component of IL22 receptor formed by IL22RA1 and IL10RB enabling IL22 signaling via JAK/STAT pathways. IL22 also induces activation of MAPK1/MAPK3 and Akt kinases pathways. Component of one of the receptor for IL20 and IL24 formed by IL22RA1 and IL20RB also signaling through STATs activation. Mediates IL24 antiangiogenic activity as well as IL24 inhibitory effect on endothelial cell tube formation and differentiation. This is Interleukin-22 receptor subunit alpha-1 (Il22ra1) from Mus musculus (Mouse).